The chain runs to 282 residues: Homeobox-leucine zipper protein HAT1 (282 aa).

Positions 71–134 are disordered; the sequence is LEEETGVSSP…EEDYGGETCR (64 aa). Positions 76–89 are enriched in low complexity; the sequence is GVSSPNSTISSTVS. The homeobox DNA-binding region spans 132–191; the sequence is TCRKKLRLSKDQSAVLEDTFKEHNTLNPKQKLALAKKLGLTARQVEVWFQNRRARTKLKQ. Positions 199–220 are leucine-zipper; it reads LKRCVEKLTEENRRLEKEAAEL.

Belongs to the HD-ZIP homeobox family. Class II subfamily. Interacts with BZIP30.

It is found in the nucleus. Its function is as follows. Probable transcription factor. The chain is Homeobox-leucine zipper protein HAT1 (HAT1) from Arabidopsis thaliana (Mouse-ear cress).